The primary structure comprises 247 residues: Adenosylcobinamide-GDP ribazoletransferase (247 aa).

The next 5 membrane-spanning stretches (helical) occupy residues 34–54 (IITFPLIGLLLGAISGLVFMV), 59–79 (CGVPLAALFSVLVLALMTGGF), 113–133 (GGLALIFVVLAKILVLSELAL), 138–158 (ILASLAAACAVSRGTAALLMY), and 194–214 (VLLPGMHGVAAMVVTMVAIFI).

It belongs to the CobS family. Mg(2+) serves as cofactor.

It localises to the cell inner membrane. It carries out the reaction alpha-ribazole + adenosylcob(III)inamide-GDP = adenosylcob(III)alamin + GMP + H(+). The catalysed reaction is alpha-ribazole 5'-phosphate + adenosylcob(III)inamide-GDP = adenosylcob(III)alamin 5'-phosphate + GMP + H(+). Its pathway is cofactor biosynthesis; adenosylcobalamin biosynthesis; adenosylcobalamin from cob(II)yrinate a,c-diamide: step 7/7. In terms of biological role, joins adenosylcobinamide-GDP and alpha-ribazole to generate adenosylcobalamin (Ado-cobalamin). Also synthesizes adenosylcobalamin 5'-phosphate from adenosylcobinamide-GDP and alpha-ribazole 5'-phosphate. In Escherichia coli (strain 55989 / EAEC), this protein is Adenosylcobinamide-GDP ribazoletransferase.